The sequence spans 387 residues: 3-ketoacyl-CoA thiolase (387 aa).

The active-site Acyl-thioester intermediate is the Cys-91. Catalysis depends on proton acceptor residues His-343 and Cys-373.

It belongs to the thiolase-like superfamily. Thiolase family. In terms of assembly, heterotetramer of two alpha chains (FadB) and two beta chains (FadA).

The protein localises to the cytoplasm. It catalyses the reaction an acyl-CoA + acetyl-CoA = a 3-oxoacyl-CoA + CoA. Its pathway is lipid metabolism; fatty acid beta-oxidation. Catalyzes the final step of fatty acid oxidation in which acetyl-CoA is released and the CoA ester of a fatty acid two carbons shorter is formed. The polypeptide is 3-ketoacyl-CoA thiolase (Shewanella sp. (strain MR-7)).